We begin with the raw amino-acid sequence, 391 residues long: CBS domain-containing protein CBSX5 (391 aa).

CBS domains lie at 16-81 (GKPP…DHDH) and 331-391 (MARK…ENDM).

In Arabidopsis thaliana (Mouse-ear cress), this protein is CBS domain-containing protein CBSX5 (CBSX5).